Here is a 78-residue protein sequence, read N- to C-terminus: RNA-binding protein Hfq (78 aa).

Residues 9–69 (DHFLNQLRKE…ISTFAPQRNV (61 aa)) enclose the Sm domain.

It belongs to the Hfq family. Homohexamer.

Its function is as follows. RNA chaperone that binds small regulatory RNA (sRNAs) and mRNAs to facilitate mRNA translational regulation in response to envelope stress, environmental stress and changes in metabolite concentrations. Also binds with high specificity to tRNAs. The chain is RNA-binding protein Hfq from Halalkalibacterium halodurans (strain ATCC BAA-125 / DSM 18197 / FERM 7344 / JCM 9153 / C-125) (Bacillus halodurans).